Consider the following 359-residue polypeptide: Small ribosomal subunit protein uS2 (359 aa).

The disordered stretch occupies residues 232–295 (EPQFKPSEFT…PVGTEPVATT (64 aa)). Composition is skewed to basic and acidic residues over residues 239 to 250 (EFTRRDGDENRN) and 257 to 273 (DNRRMSGRNERGRDTHY).

This sequence belongs to the universal ribosomal protein uS2 family.

This is Small ribosomal subunit protein uS2 (rpsB) from Spiroplasma citri.